A 794-amino-acid polypeptide reads, in one-letter code: FT-interacting protein 1 (794 aa).

The segment covering 1–27 (MAAKDGAKSQEDYKLKDMKPELGERWP) has biased composition (basic and acidic residues). A disordered region spans residues 1-34 (MAAKDGAKSQEDYKLKDMKPELGERWPHGGQRGG). 3 C2 domains span residues 37–158 (WIGS…PQWY), 198–321 (VQGE…SKWY), and 364–492 (YISD…THSY). Ca(2+) is bound by residues aspartate 76, aspartate 123, glutamate 125, and glutamate 131. A run of 4 helical transmembrane segments spans residues 510-532 (LAVRFTCLSLAHMIYLYGHPLLP), 595-615 (IVSVFAGLIAMSKWLGDVCYW), 619-639 (LTTILFHVLFFILICYPELIL), and 737-757 (LFVIFCLVAAMILYVTPFKII).

It belongs to the MCTP family. As to quaternary structure, interacts with FT in phloem companion cells. It depends on Ca(2+) as a cofactor. Expressed in the vascular tissues of roots, cotyledons and rosette leaves. Specifically located in the phloem including companion cells. Observed in flowers. Not detected in the shoot apical meristem.

The protein resides in the endoplasmic reticulum membrane. It localises to the cell junction. It is found in the plasmodesma. Functionally, involved in the export of FT from the phloem companion cells to the sieve elements through the plasmodesmata. Regulates flowering time under long days. May function as a signaling molecule by regulating the trafficking of other regulators. The chain is FT-interacting protein 1 from Arabidopsis thaliana (Mouse-ear cress).